The following is a 981-amino-acid chain: GPI ethanolamine phosphate transferase 1 (981 aa).

Residues 1 to 6 are Cytoplasmic-facing; sequence MAGSSR. The chain crosses the membrane as a helical span at residues 7–27; that stretch reads IGFMAIAVAFHLVYILSIFDI. The Lumenal portion of the chain corresponds to 28 to 464; sequence YFVSPIVTGM…LQTYDWLFLR (437 aa). N-linked (GlcNAc...) asparagine glycosylation is found at N148, N211, and N295. The helical transmembrane segment at 465-485 threads the bilayer; the sequence is ALITIGYLGWMAYATTTVLSL. Topologically, residues 486–496 are cytoplasmic; the sequence is YVVKESMSPQR. A helical transmembrane segment spans residues 497-517; it reads TLLGSAFFLSLLVALYSSFII. Residues 518 to 519 are Lumenal-facing; that stretch reads SK. A helical transmembrane segment spans residues 520–540; the sequence is SPPAYYLYAFFPVLFWEEVYA. At 541 to 560 the chain is on the cytoplasmic side; it reads RRANVAKGFQALFGHVKSGG. The helical transmembrane segment at 561–581 threads the bilayer; the sequence is AVVALVFNVVLYLGVIQSLAL. Over 582–587 the chain is Lumenal; sequence AYIHRE. Residues 588-608 traverse the membrane as a helical segment; it reads ILTGLFVLGAFWPMTQGISFL. The Cytoplasmic segment spans residues 609 to 611; it reads RSH. The chain crosses the membrane as a helical span at residues 612-632; the sequence is LFLSMLWFFSCLAMSTFTLLP. Topologically, residues 633–638 are lumenal; that stretch reads AMKVED. A helical transmembrane segment spans residues 639-659; that stretch reads IPLIMAGGGLMTFVGLAYLVL. The Cytoplasmic portion of the chain corresponds to 660 to 681; that stretch reads EDFILSDVSSSKTKLKRLHTSR. A helical transmembrane segment spans residues 682–702; it reads TLLGIQVGLIILAMLVTHSSA. Residues 703 to 708 are Lumenal-facing; it reads TSLQAK. Residues 709–729 traverse the membrane as a helical segment; the sequence is LGLPKGNQIVGWFVLVTSLLM. Residues 730–744 are Cytoplasmic-facing; sequence PLAYRLQPNSHYMHR. The helical transmembrane segment at 745–767 threads the bilayer; that stretch reads LAIIFLTCAPTFVILTISYEGLF. The Lumenal portion of the chain corresponds to 768 to 819; it reads YVAFSITLLSWVRLEYAVDAFTQEKAKKQATVAGSQQHTPSTFRPLSLSDAR. Residues 820 to 840 form a helical membrane-spanning segment; that stretch reads IALFFMVLLQSAFFSTGNIAS. Over 841-862 the chain is Cytoplasmic; that stretch reads ISSFSLESVSRLIPVFDPFSQG. The chain crosses the membrane as a helical span at residues 863 to 883; it reads ALLILKIIIPFFLISANLGVL. The Lumenal portion of the chain corresponds to 884–892; that stretch reads NKRLGVAPS. A helical transmembrane segment spans residues 893–913; that stretch reads AIFMVVLTASDVLTLYFFWVV. The Cytoplasmic segment spans residues 914–929; the sequence is KDEGSWLEIGSTITHF. A helical transmembrane segment spans residues 930–950; the sequence is AIASFLCVFVAALEFVSAAFI. The Lumenal portion of the chain corresponds to 951–981; it reads AGIEVEDTKSAALTSASTKADEKVPPVAGAE.

Belongs to the PIGG/PIGN/PIGO family. PIGN subfamily.

It is found in the endoplasmic reticulum membrane. The protein operates within glycolipid biosynthesis; glycosylphosphatidylinositol-anchor biosynthesis. Its function is as follows. Ethanolamine phosphate transferase involved in glycosylphosphatidylinositol-anchor biosynthesis. Transfers ethanolamine phosphate to the first alpha-1,4-linked mannose of the glycosylphosphatidylinositol precursor of GPI-anchor. The chain is GPI ethanolamine phosphate transferase 1 (MCD4) from Gibberella zeae (strain ATCC MYA-4620 / CBS 123657 / FGSC 9075 / NRRL 31084 / PH-1) (Wheat head blight fungus).